The chain runs to 356 residues: tRNA N6-adenosine threonylcarbamoyltransferase (356 aa).

Fe cation contacts are provided by His-115 and His-119. Residues 138 to 142 (LVSGG), Asp-171, Gly-184, and Asn-283 each bind substrate. Asp-311 contacts Fe cation.

The protein belongs to the KAE1 / TsaD family. Fe(2+) serves as cofactor.

It is found in the cytoplasm. The enzyme catalyses L-threonylcarbamoyladenylate + adenosine(37) in tRNA = N(6)-L-threonylcarbamoyladenosine(37) in tRNA + AMP + H(+). Required for the formation of a threonylcarbamoyl group on adenosine at position 37 (t(6)A37) in tRNAs that read codons beginning with adenine. Is involved in the transfer of the threonylcarbamoyl moiety of threonylcarbamoyl-AMP (TC-AMP) to the N6 group of A37, together with TsaE and TsaB. TsaD likely plays a direct catalytic role in this reaction. The polypeptide is tRNA N6-adenosine threonylcarbamoyltransferase (Prochlorococcus marinus (strain NATL1A)).